A 2157-amino-acid polypeptide reads, in one-letter code: Mediator of RNA polymerase II transcription subunit 12-like protein (2157 aa).

The segment at 1-31 is disordered; the sequence is MAAFGLLSYEQRPLKRPRLGPPDVYPQDPKQ. Thr-462 is modified (phosphothreonine). A compositionally biased stretch (basic and acidic residues) spans 1437–1456; it reads ELEKGQHLGSSSKKERDRQK. Disordered regions lie at residues 1437–1461, 1724–1807, and 2040–2157; these read ELEKGQHLGSSSKKERDRQKQKSMS, RSYY…SQMT, and IDAV…PSHF. Residues 1771–1780 are compositionally biased toward basic residues; the sequence is TKGRKRKTKS. Composition is skewed to low complexity over residues 2063 to 2076, 2083 to 2101, and 2116 to 2136; these read PRQQQVRQQQRLLQ, QQPQQAPQPQQPSQTQSQA, and RQGLQQTQQQQQTAALVRQLQ. Polar residues predominate over residues 2137–2148; sequence KQLSSNQPQQGV.

Belongs to the Mediator complex subunit 12 family. May be a component of the Mediator complex, which is known to be composed of MED1, MED4, MED6, MED7, MED8, MED9, MED10, MED11, MED12, MED13, MED13L, MED14, MED15, MED16, MED17, MED18, MED19, MED20, MED21, MED22, MED23, MED24, MED25, MED26, MED27, MED29, MED30, MED31, CCNC, CDK8 and CDC2L6/CDK11. The MED12, MED13, CCNC and CDK8 subunits form a distinct module termed the CDK8 module. Mediator containing the CDK8 module is less active than Mediator lacking this module in supporting transcriptional activation. Individual preparations of the Mediator complex lacking one or more distinct subunits have been variously termed ARC, CRSP, DRIP, PC2, SMCC and TRAP.

Its subcellular location is the nucleus. Its function is as follows. May be a component of the Mediator complex, a coactivator involved in the regulated transcription of nearly all RNA polymerase II-dependent genes. Mediator functions as a bridge to convey information from gene-specific regulatory proteins to the basal RNA polymerase II transcription machinery. Mediator is recruited to promoters by direct interactions with regulatory proteins and serves as a scaffold for the assembly of a functional preinitiation complex with RNA polymerase II and the general transcription factors. The sequence is that of Mediator of RNA polymerase II transcription subunit 12-like protein (Med12l) from Mus musculus (Mouse).